Consider the following 572-residue polypeptide: 2-succinyl-5-enolpyruvyl-6-hydroxy-3-cyclohexene-1-carboxylate synthase (572 aa).

This sequence belongs to the TPP enzyme family. MenD subfamily. Homodimer. Requires Mg(2+) as cofactor. It depends on Mn(2+) as a cofactor. The cofactor is thiamine diphosphate.

It catalyses the reaction isochorismate + 2-oxoglutarate + H(+) = 5-enolpyruvoyl-6-hydroxy-2-succinyl-cyclohex-3-ene-1-carboxylate + CO2. The protein operates within quinol/quinone metabolism; 1,4-dihydroxy-2-naphthoate biosynthesis; 1,4-dihydroxy-2-naphthoate from chorismate: step 2/7. Its pathway is quinol/quinone metabolism; menaquinone biosynthesis. Functionally, catalyzes the thiamine diphosphate-dependent decarboxylation of 2-oxoglutarate and the subsequent addition of the resulting succinic semialdehyde-thiamine pyrophosphate anion to isochorismate to yield 2-succinyl-5-enolpyruvyl-6-hydroxy-3-cyclohexene-1-carboxylate (SEPHCHC). This chain is 2-succinyl-5-enolpyruvyl-6-hydroxy-3-cyclohexene-1-carboxylate synthase, found in Aeromonas salmonicida (strain A449).